The following is a 302-amino-acid chain: N-acetyl-D-glucosamine kinase (302 aa).

ATP contacts are provided by residues 4 to 11 and 133 to 140; these read GFDVGGTK and GFGGGLVY. Zn(2+)-binding residues include H157, C177, C179, and C184.

The protein belongs to the ROK (NagC/XylR) family. NagK subfamily.

The catalysed reaction is N-acetyl-D-glucosamine + ATP = N-acetyl-D-glucosamine 6-phosphate + ADP + H(+). Its pathway is cell wall biogenesis; peptidoglycan recycling. Catalyzes the phosphorylation of N-acetyl-D-glucosamine (GlcNAc) derived from cell-wall degradation, yielding GlcNAc-6-P. The polypeptide is N-acetyl-D-glucosamine kinase (Vibrio atlanticus (strain LGP32) (Vibrio splendidus (strain Mel32))).